Reading from the N-terminus, the 435-residue chain is Probable exopolygalacturonase B (435 aa).

The signal sequence occupies residues 1–15 (MKFFLATLFASAVSS). 3 N-linked (GlcNAc...) asparagine glycosylation sites follow: Asn-59, Asn-184, and Asn-224. PbH1 repeat units follow at residues 208–239 (SKDVSFDDVYIHAFSTNKSALPKNSDGFDSLN), 240–261 (VDGLTVTNTRVDVGDDCFSPKP), 262–283 (NTTNIFVQNLLCNNTHGVSMGS), 294–315 (IEHAYIENVTLLNGQNGARLKA), and 326–347 (INNITYKNIRIENTDAPVVLDQ). The active-site Proton donor is Asp-254. A disulfide bridge connects residues Cys-256 and Cys-273. Residues Asn-262 and Asn-274 are each glycosylated (N-linked (GlcNAc...) asparagine). The active site involves His-277. 4 N-linked (GlcNAc...) asparagine glycosylation sites follow: Asn-301, Asn-328, Asn-365, and Asn-373. The stretch at 366-388 (VTNILFENISGTSSGKNGKVVAD) is one PbH1 6 repeat. A disulfide bridge connects residues Cys-391 and Cys-397. An N-linked (GlcNAc...) asparagine glycan is attached at Asn-406.

Belongs to the glycosyl hydrolase 28 family.

The protein resides in the secreted. It carries out the reaction [(1-&gt;4)-alpha-D-galacturonosyl](n) + H2O = alpha-D-galacturonate + [(1-&gt;4)-alpha-D-galacturonosyl](n-1). Its function is as follows. Specific in hydrolyzing the terminal glycosidic bond of polygalacturonic acid and oligogalacturonates. The protein is Probable exopolygalacturonase B (pgxB) of Aspergillus flavus (strain ATCC 200026 / FGSC A1120 / IAM 13836 / NRRL 3357 / JCM 12722 / SRRC 167).